The sequence spans 65 residues: Potassium channel toxin alpha-KTx 12.6 (65 aa).

The signal sequence occupies residues 1-22 (MKMKIFIITIVIALFITSIVEA). 3 disulfide bridges follow: Cys30-Cys51, Cys36-Cys56, and Cys40-Cys58.

This sequence belongs to the short scorpion toxin superfamily. Potassium channel inhibitor family. Alpha-KTx 12 subfamily. In terms of tissue distribution, expressed by the venom gland.

The protein localises to the secreted. Its function is as follows. Inhibits voltage-gated potassium channels. This Lychas mucronatus (Chinese swimming scorpion) protein is Potassium channel toxin alpha-KTx 12.6.